Here is a 467-residue protein sequence, read N- to C-terminus: 3-isopropylmalate dehydratase large subunit (467 aa).

Positions 347, 407, and 410 each coordinate [4Fe-4S] cluster.

This sequence belongs to the aconitase/IPM isomerase family. LeuC type 1 subfamily. Heterodimer of LeuC and LeuD. [4Fe-4S] cluster is required as a cofactor.

It carries out the reaction (2R,3S)-3-isopropylmalate = (2S)-2-isopropylmalate. It functions in the pathway amino-acid biosynthesis; L-leucine biosynthesis; L-leucine from 3-methyl-2-oxobutanoate: step 2/4. In terms of biological role, catalyzes the isomerization between 2-isopropylmalate and 3-isopropylmalate, via the formation of 2-isopropylmaleate. The polypeptide is 3-isopropylmalate dehydratase large subunit (Prochlorococcus marinus (strain MIT 9301)).